A 106-amino-acid chain; its full sequence is Nucleoid-associated protein Nham_0463 (106 aa).

It belongs to the YbaB/EbfC family. Homodimer.

Its subcellular location is the cytoplasm. It localises to the nucleoid. Its function is as follows. Binds to DNA and alters its conformation. May be involved in regulation of gene expression, nucleoid organization and DNA protection. This is Nucleoid-associated protein Nham_0463 from Nitrobacter hamburgensis (strain DSM 10229 / NCIMB 13809 / X14).